The chain runs to 971 residues: Oncostatin-M-specific receptor subunit beta (971 aa).

The first 23 residues, 1 to 23 (MAFSVVLHPAFLLAVLSLRASRS), serve as a signal peptide directing secretion. At 24 to 737 (EVLEEPLPLT…VTTPDARSHM (714 aa)) the chain is on the extracellular side. N-linked (GlcNAc...) asparagine glycosylation is found at asparagine 74, asparagine 97, asparagine 130, asparagine 162, and asparagine 239. Cysteines 242 and 252 form a disulfide. Asparagine 271, asparagine 304, asparagine 323, and asparagine 377 each carry an N-linked (GlcNAc...) asparagine glycan. Fibronectin type-III domains lie at 332–425 (APQD…TPET), 427–523 (PSQA…SNDS), 524–620 (GHEE…TQEL), and 622–733 (PLVN…TPDA). The WSXWS motif signature appears at 412–416 (WSDWT). N-linked (GlcNAc...) asparagine glycans are attached at residues asparagine 491, asparagine 541, asparagine 577, asparagine 689, and asparagine 722. Residues 738-758 (LLQIILPMTLCVLLSIIVCYW) form a helical membrane-spanning segment. Residues 759 to 971 (KSQWVKEKCY…STVLLGQGEQ (213 aa)) lie on the Cytoplasmic side of the membrane. The Box 1 motif signature appears at 767-775 (CYPDIPNPY). Positions 949–971 (LASPSLKEDNSLTSTVLLGQGEQ) are disordered. The segment covering 959–971 (SLTSTVLLGQGEQ) has biased composition (polar residues).

This sequence belongs to the type I cytokine receptor family. Type 2 subfamily. In terms of assembly, heterodimer composed of OSMR and IL6ST (type II OSM receptor). Heterodimer with IL31RA to form the IL31 receptor. As to expression, widely expressed. Expressed at highest levels in the lung, heart, thymus and spleen. Expressed in dorsal root ganglia.

It localises to the membrane. Its function is as follows. Associates with IL31RA to form the IL31 receptor. Binds IL31 to activate STAT3 and possibly STAT1 and STAT5. Capable of transducing OSM-specific signaling events. The polypeptide is Oncostatin-M-specific receptor subunit beta (Osmr) (Mus musculus (Mouse)).